Consider the following 34-residue polypeptide: Toxin Ptu1 (34 aa).

3 disulfides stabilise this stretch: C5-C20, C12-C26, and C19-C33.

It localises to the secreted. Binds reversibly and blocks N-type voltage-gated calcium channels (Cav). This is Toxin Ptu1 from Peirates turpis (Assassin bug).